The sequence spans 452 residues: Rhodopsin (452 aa).

Topologically, residues 1 to 33 are extracellular; it reads MGRDIPDNETWWYNPYMDIHPHWKQFDQVPAAV. Asn8 is a glycosylation site (N-linked (GlcNAc...) asparagine). Residues 34 to 58 traverse the membrane as a helical segment; sequence YYSLGIFIAICGIIGCVGNGVVIYL. Residues 59 to 70 lie on the Cytoplasmic side of the membrane; it reads FTKTKSLQTPAN. A helical membrane pass occupies residues 71-97; that stretch reads MFIINLAFSDFTFSLVNGFPLMTISCF. Residues 98–109 lie on the Extracellular side of the membrane; sequence MKYWVFGNAACK. A disulfide bridge connects residues Cys108 and Cys186. A helical membrane pass occupies residues 110-131; the sequence is VYGLIGGIFGLMSIMTMTMISI. The 'Ionic lock' involved in activated form stabilization motif lies at 132 to 134; it reads DRY. Topologically, residues 132–151 are cytoplasmic; that stretch reads DRYNVIGRPMSASKKMSHRK. Residues 152 to 172 form a helical membrane-spanning segment; sequence AFIMIIFVWIWSTIWAIGPIF. Residues 173–199 lie on the Extracellular side of the membrane; sequence GWGAYTLEGVLCNCSFDYITRDTTTRS. The helical transmembrane segment at 200-224 threads the bilayer; that stretch reads NILCMYIFAFMCPIVVIFFCYFNIV. Over 225-261 the chain is Cytoplasmic; that stretch reads MSVSNHEKEMAAMAKRLNAKELRKAQAGANAEMKLAK. Residues 262–283 form a helical membrane-spanning segment; the sequence is ISIVIVTQFLLSWSPYAVVALL. Over 284–293 the chain is Extracellular; it reads AQFGPIEWVT. A helical membrane pass occupies residues 294 to 315; sequence PYAAQLPVMFAKASAIHNPMIY. The residue at position 305 (Lys305) is an N6-(retinylidene)lysine. At 316-452 the chain is on the cytoplasmic side; sequence SVSHPKFRER…QGVDNQAYQA (137 aa). S-palmitoyl cysteine attachment occurs at residues Cys336 and Cys337. Disordered regions lie at residues 346–365 and 376–452; these read DDKD…GETA and MMQK…AYQA. Residues 376–388 show a composition bias toward low complexity; sequence MMQKMQAQQQQQP. A compositionally biased stretch (pro residues) spans 389–440; the sequence is AYPPQGYPPQGYPPPPPQGYPPQGYPPQGYPPQGYPPPPQGPPPQGPPPQAA.

The protein belongs to the G-protein coupled receptor 1 family. Opsin subfamily. In terms of processing, contains one covalently linked retinal chromophore. Upon light absorption, the covalently bound 11-cis-retinal is converted to all-trans-retinal. After hydrolysis of the Schiff base and release of the covalently bound all-trans-retinal, active rhodopsin is regenerated by binding of a fresh molecule of 11-cis-retinal.

It localises to the cell projection. Its subcellular location is the rhabdomere membrane. Its function is as follows. Photoreceptor required for image-forming vision at low light intensity. Light-induced isomerization of 11-cis to all-trans retinal triggers a conformational change that activates signaling via G-proteins. Signaling mediates the activation of phospholipase C. Subsequent receptor phosphorylation mediates displacement of the bound G-protein alpha subunit by arrestin and terminates signaling. The sequence is that of Rhodopsin (RHO) from Loligo forbesii (Veined squid).